Here is a 134-residue protein sequence, read N- to C-terminus: Cytochrome b (134 aa).

Transmembrane regions (helical) follow at residues 33–53 (FGSLLGLCLAVQILTGLFLAM), 77–98 (WLIRYMHANGASMFFICLFLHV), and 113–133 (WNMGIILLFAVMATAFMGYVL). H83 and H97 together coordinate heme b.

The protein belongs to the cytochrome b family. As to quaternary structure, the cytochrome bc1 complex contains 11 subunits: 3 respiratory subunits (MT-CYB, CYC1 and UQCRFS1), 2 core proteins (UQCRC1 and UQCRC2) and 6 low-molecular weight proteins (UQCRH/QCR6, UQCRB/QCR7, UQCRQ/QCR8, UQCR10/QCR9, UQCR11/QCR10 and a cleavage product of UQCRFS1). This cytochrome bc1 complex then forms a dimer. Requires heme b as cofactor.

The protein localises to the mitochondrion inner membrane. Its function is as follows. Component of the ubiquinol-cytochrome c reductase complex (complex III or cytochrome b-c1 complex) that is part of the mitochondrial respiratory chain. The b-c1 complex mediates electron transfer from ubiquinol to cytochrome c. Contributes to the generation of a proton gradient across the mitochondrial membrane that is then used for ATP synthesis. The sequence is that of Cytochrome b (MT-CYB) from Microtus subterraneus (European pine vole).